Consider the following 439-residue polypeptide: Hydrogenobyrinate a,c-diamide synthase (439 aa).

Residues 247-439 form the GATase cobBQ-type domain; it reads RIALAEDGAF…FFHAIARASA (193 aa). Cys329 serves as the catalytic Nucleophile.

This sequence belongs to the CobB/CbiA family. Requires Mg(2+) as cofactor.

The catalysed reaction is hydrogenobyrinate + 2 L-glutamine + 2 ATP + 2 H2O = hydrogenobyrinate a,c-diamide + 2 L-glutamate + 2 ADP + 2 phosphate + 2 H(+). It functions in the pathway cofactor biosynthesis; adenosylcobalamin biosynthesis; cob(II)yrinate a,c-diamide from precorrin-2 (aerobic route): step 9/10. In terms of biological role, catalyzes the ATP-dependent amidation of the two carboxylate groups at positions a and c of hydrogenobyrinate, using either L-glutamine or ammonia as the nitrogen source. The sequence is that of Hydrogenobyrinate a,c-diamide synthase from Mesorhizobium japonicum (strain LMG 29417 / CECT 9101 / MAFF 303099) (Mesorhizobium loti (strain MAFF 303099)).